The sequence spans 475 residues: Tesmin (475 aa).

2 positions are modified to phosphoserine: Ser34 and Ser67. The 110-residue stretch at 263-372 folds into the CRC domain; it reads SGPALQGPPK…KCIACKNYEE (110 aa).

This sequence belongs to the lin-54 family.

It localises to the cytoplasm. It is found in the nucleus. Its function is as follows. May have a role in spermatogenesis. The polypeptide is Tesmin (Rattus norvegicus (Rat)).